The chain runs to 176 residues: Ribosome rescue factor SmrB (176 aa).

The Smr domain occupies 98 to 173 (LDLHGLTQMQ…GTAAILLLVE (76 aa)).

This sequence belongs to the SmrB family. As to quaternary structure, associates with collided ribosomes, but not with correctly translating polysomes.

Functionally, acts as a ribosome collision sensor. Detects stalled/collided disomes (pairs of ribosomes where the leading ribosome is stalled and a second ribosome has collided with it) and endonucleolytically cleaves mRNA at the 5' boundary of the stalled ribosome. Stalled/collided disomes form a new interface (primarily via the 30S subunits) that binds SmrB. Cleaved mRNA becomes available for tmRNA ligation, leading to ribosomal subunit dissociation and rescue of stalled ribosomes. In Serratia proteamaculans (strain 568), this protein is Ribosome rescue factor SmrB.